The sequence spans 253 residues: Zinc import ATP-binding protein ZnuC (253 aa).

Positions 6–227 constitute an ABC transporter domain; that stretch reads VTLNKISVTF…FGNRGAEQLA (222 aa). 38–45 provides a ligand contact to ATP; that stretch reads GPNGAGKS.

It belongs to the ABC transporter superfamily. Zinc importer (TC 3.A.1.15.5) family. In terms of assembly, the complex is composed of two ATP-binding proteins (ZnuC), two transmembrane proteins (ZnuB) and a solute-binding protein (ZnuA).

The protein resides in the cell inner membrane. The enzyme catalyses Zn(2+)(out) + ATP(in) + H2O(in) = Zn(2+)(in) + ADP(in) + phosphate(in) + H(+)(in). Part of the ABC transporter complex ZnuABC involved in zinc import. Responsible for energy coupling to the transport system. The chain is Zinc import ATP-binding protein ZnuC from Yersinia pseudotuberculosis serotype I (strain IP32953).